We begin with the raw amino-acid sequence, 427 residues long: Enolase 1 (427 aa).

Q162 lines the (2R)-2-phosphoglycerate pocket. E204 serves as the catalytic Proton donor. Residues D241, E285, and D312 each coordinate Mg(2+). The (2R)-2-phosphoglycerate site is built by K337, R366, S367, and K388. K337 functions as the Proton acceptor in the catalytic mechanism.

Belongs to the enolase family. The cofactor is Mg(2+).

Its subcellular location is the cytoplasm. It localises to the secreted. The protein resides in the cell surface. The catalysed reaction is (2R)-2-phosphoglycerate = phosphoenolpyruvate + H2O. It participates in carbohydrate degradation; glycolysis; pyruvate from D-glyceraldehyde 3-phosphate: step 4/5. Catalyzes the reversible conversion of 2-phosphoglycerate (2-PG) into phosphoenolpyruvate (PEP). It is essential for the degradation of carbohydrates via glycolysis. The sequence is that of Enolase 1 from Chlorobaculum tepidum (strain ATCC 49652 / DSM 12025 / NBRC 103806 / TLS) (Chlorobium tepidum).